The primary structure comprises 348 residues: Fe(3+) ions import ATP-binding protein FbpC (348 aa).

One can recognise an ABC transporter domain in the interval 6–236 (LSLEGATVRF…PADAFVARFL (231 aa)). Position 38 to 45 (38 to 45 (GPSGSGKS)) interacts with ATP.

The protein belongs to the ABC transporter superfamily. Fe(3+) ion importer (TC 3.A.1.10) family. The complex is composed of two ATP-binding proteins (FbpC), two transmembrane proteins (FbpB) and a solute-binding protein (FbpA).

It is found in the cell membrane. The catalysed reaction is Fe(3+)(out) + ATP + H2O = Fe(3+)(in) + ADP + phosphate + H(+). In terms of biological role, part of the ABC transporter complex FbpABC involved in Fe(3+) ions import. Responsible for energy coupling to the transport system. In Streptomyces coelicolor (strain ATCC BAA-471 / A3(2) / M145), this protein is Fe(3+) ions import ATP-binding protein FbpC.